A 69-amino-acid polypeptide reads, in one-letter code: Small ribosomal subunit protein bS21 (69 aa).

Residues lysine 50 to arginine 69 are disordered.

Belongs to the bacterial ribosomal protein bS21 family.

This Borrelia garinii subsp. bavariensis (strain ATCC BAA-2496 / DSM 23469 / PBi) (Borreliella bavariensis) protein is Small ribosomal subunit protein bS21.